The following is a 342-amino-acid chain: tRNA dimethylallyltransferase (342 aa).

A compositionally biased stretch (polar residues) spans 1–13 (MNDTTAKTLNCSP). The segment at 1–21 (MNDTTAKTLNCSPASRDGFPE) is disordered. An ATP-binding site is contributed by 40–47 (GPTGVGKT). 42 to 47 (TGVGKT) is a substrate binding site. Interaction with substrate tRNA stretches follow at residues 65–68 (DSMQ) and 189–193 (QRILR).

Belongs to the IPP transferase family. Monomer. The cofactor is Mg(2+).

It catalyses the reaction adenosine(37) in tRNA + dimethylallyl diphosphate = N(6)-dimethylallyladenosine(37) in tRNA + diphosphate. Catalyzes the transfer of a dimethylallyl group onto the adenine at position 37 in tRNAs that read codons beginning with uridine, leading to the formation of N6-(dimethylallyl)adenosine (i(6)A). The polypeptide is tRNA dimethylallyltransferase (Syntrophobacter fumaroxidans (strain DSM 10017 / MPOB)).